The following is a 93-amino-acid chain: Integration host factor subunit beta (93 aa).

The protein belongs to the bacterial histone-like protein family. As to quaternary structure, heterodimer of an alpha and a beta chain.

This protein is one of the two subunits of integration host factor, a specific DNA-binding protein that functions in genetic recombination as well as in transcriptional and translational control. This chain is Integration host factor subunit beta, found in Glaesserella parasuis serovar 5 (strain SH0165) (Haemophilus parasuis).